A 355-amino-acid chain; its full sequence is Protein RecA (355 aa).

Residue 72–79 (GPESSGKT) participates in ATP binding.

The protein belongs to the RecA family.

It localises to the cytoplasm. In terms of biological role, can catalyze the hydrolysis of ATP in the presence of single-stranded DNA, the ATP-dependent uptake of single-stranded DNA by duplex DNA, and the ATP-dependent hybridization of homologous single-stranded DNAs. It interacts with LexA causing its activation and leading to its autocatalytic cleavage. The polypeptide is Protein RecA (Wolbachia sp. subsp. Brugia malayi (strain TRS)).